Consider the following 464-residue polypeptide: DNA primase DnaG (464 aa).

One can recognise a Toprim domain in the interval 171–245 (DTIIIVEGRA…DIDYVARAPK (75 aa)). 3 residues coordinate Mg(2+): E177, D219, and D221.

Belongs to the archaeal DnaG primase family. In terms of assembly, forms a ternary complex with MCM helicase and DNA. Requires Mg(2+) as cofactor.

It catalyses the reaction ssDNA + n NTP = ssDNA/pppN(pN)n-1 hybrid + (n-1) diphosphate.. In terms of biological role, RNA polymerase that catalyzes the synthesis of short RNA molecules used as primers for DNA polymerase during DNA replication. The sequence is that of DNA primase DnaG from Methanococcus aeolicus (strain ATCC BAA-1280 / DSM 17508 / OCM 812 / Nankai-3).